The sequence spans 677 residues: DNA ligase (677 aa).

NAD(+) is bound by residues 32 to 36 (DAQYD), 81 to 82 (SL), and Glu112. Lys114 (N6-AMP-lysine intermediate) is an active-site residue. Positions 135, 171, 288, and 312 each coordinate NAD(+). Residues Cys416, Cys419, Cys434, and Cys439 each coordinate Zn(2+). Residues 598–677 (NKNMPFSGME…REFINMLEQS (80 aa)) form the BRCT domain.

Belongs to the NAD-dependent DNA ligase family. LigA subfamily. Requires Mg(2+) as cofactor. Mn(2+) serves as cofactor.

It catalyses the reaction NAD(+) + (deoxyribonucleotide)n-3'-hydroxyl + 5'-phospho-(deoxyribonucleotide)m = (deoxyribonucleotide)n+m + AMP + beta-nicotinamide D-nucleotide.. Functionally, DNA ligase that catalyzes the formation of phosphodiester linkages between 5'-phosphoryl and 3'-hydroxyl groups in double-stranded DNA using NAD as a coenzyme and as the energy source for the reaction. It is essential for DNA replication and repair of damaged DNA. In Dehalococcoides mccartyi (strain CBDB1), this protein is DNA ligase.